The following is a 272-amino-acid chain: HMP-PP phosphatase (272 aa).

Catalysis depends on D8, which acts as the Nucleophile. Positions 8, 10, and 212 each coordinate Mg(2+).

The protein belongs to the HAD-like hydrolase superfamily. Cof family. It depends on Mg(2+) as a cofactor.

It catalyses the reaction 4-amino-2-methyl-5-(diphosphooxymethyl)pyrimidine + H2O = 4-amino-2-methyl-5-(phosphooxymethyl)pyrimidine + phosphate + H(+). Catalyzes the hydrolysis of 4-amino-2-methyl-5-hydroxymethylpyrimidine pyrophosphate (HMP-PP) to 4-amino-2-methyl-5-hydroxymethylpyrimidine phosphate (HMP-P). The polypeptide is HMP-PP phosphatase (Citrobacter koseri (strain ATCC BAA-895 / CDC 4225-83 / SGSC4696)).